The chain runs to 248 residues: MIVLVTGATAGFGECITRRFIQQGHKVIATGRRQERLQELTDELGDNLYIAQLDVRNRAAIEEMLASLPAEWSNIDILVNNAGLALGMEPAHKASVEDWETMIDTNNKGLVYMTRAVLPGMVERNHGHIINIGSTAGSWPYAGGNVYGATKAFVRQFSLNLRTDLHGTTVRVTDIEPGLVGGTEFSNVRFKGDDGKAEKTYQNTVALTPEDVSEAVWWVSTLPAHVNINTLEMMPVTQSYAGLNVHRQ.

Residues 7–12 (GATAGF), 32–33 (RR), 54–55 (DV), and Asn-81 contribute to the NADP(+) site. Ser-134 contributes to the substrate binding site. NADP(+)-binding positions include Tyr-147, Lys-151, and 177 to 185 (PGLVGGTEF). Tyr-147 serves as the catalytic Proton acceptor.

It belongs to the short-chain dehydrogenases/reductases (SDR) family. Homotetramer.

It catalyses the reaction 3-hydroxypropanoate + NADP(+) = 3-oxopropanoate + NADPH + H(+). The enzyme catalyses L-allo-threonine + NADP(+) = aminoacetone + CO2 + NADPH. Functionally, NADP-dependent dehydrogenase with broad substrate specificity acting on 3-hydroxy acids. Catalyzes the NADP-dependent oxidation of L-allo-threonine to L-2-amino-3-keto-butyrate, which is spontaneously decarboxylated into aminoacetone. Also acts on D-threonine, L-serine, D-serine, D-3-hydroxyisobutyrate, L-3-hydroxyisobutyrate, D-glycerate and L-glycerate. Able to catalyze the reduction of the malonic semialdehyde to 3-hydroxypropionic acid. YdfG is apparently supplementing RutE, the presumed malonic semialdehyde reductase involved in pyrimidine degradation since both are able to detoxify malonic semialdehyde. This chain is NADP-dependent 3-hydroxy acid dehydrogenase YdfG, found in Shigella flexneri.